Reading from the N-terminus, the 1048-residue chain is 3-hydroxy-3-methylglutaryl-coenzyme A reductase (1048 aa).

The Cytoplasmic portion of the chain corresponds to 1 to 32; the sequence is MDPVVRKPDPGGVQHRVTKALRAIVGHACRHP. The chain crosses the membrane as a helical span at residues 33–53; sequence IHTLLVTALTAATTHLHVLEG. Residues 54–220 lie on the Lumenal side of the membrane; that stretch reads TYQATHRGLA…FLHRVHHAET (167 aa). A helical membrane pass occupies residues 221-241; that stretch reads VDLVIIGLSYLAMNMTVVSLF. Residues 222 to 403 form the SSD domain; it reads DLVIIGLSYL…FTFYATILCV (182 aa). The Cytoplasmic segment spans residues 242–250; it reads RVMRHLGSR. Residues 251–271 traverse the membrane as a helical segment; that stretch reads FWLAASVLLSGAFAFVLGLGI. The Lumenal portion of the chain corresponds to 272-276; it reads TTTCD. A helical transmembrane segment spans residues 277-297; sequence VPVDMLLLFEGIPYLVLTVGF. Over 298-348 the chain is Cytoplasmic; it reads EKPIQLTRAVLCVSEELWGGGQRQVPNGASSDDSRQNQLIPNIIQLAVDRE. Residues 349–369 form a helical membrane-spanning segment; sequence GWYIVRSYLLEIGALALGAVL. Over 370–377 the chain is Lumenal; it reads RPKDSLGH. Residues 378-398 traverse the membrane as a helical segment; the sequence is FCFLAAWTLLIDAVLLFTFYA. The Cytoplasmic segment spans residues 399–439; the sequence is TILCVKLEITRIRSPGGLGQVNAKHPSGIFGHKVKSTNITW. Residues 440–460 form a helical membrane-spanning segment; the sequence is WKLLTVGGFVLCHFLQLSPFF. The Lumenal portion of the chain corresponds to 461–542; that stretch reads YRVMGEYMAN…LDGLESPLGR (82 aa). N-linked (GlcNAc...) asparagine glycosylation is found at Asn-470 and Asn-520. A helical transmembrane segment spans residues 543-563; the sequence is LCLMGALVVSLVLNNHLIHAA. Topologically, residues 564 to 1048 are cytoplasmic; sequence RWHAWPQARE…NRSAGATVKK (485 aa). Glu-729 (charge relay system) is an active-site residue. Position 735-741 (735-741) interacts with CoA; that stretch reads SASRGCK. NADP(+) contacts are provided by residues 796–798 and 823–831; these read SRF and DAMGMNMIS. Lys-863 acts as the Charge relay system in catalysis. 892–894 contacts CoA; the sequence is VLK. Residue Asp-939 is the Charge relay system of the active site. 1034-1035 is a CoA binding site; that stretch reads AH. His-1035 serves as the catalytic Proton donor. Residue 1039–1040 participates in NADP(+) binding; sequence NR.

This sequence belongs to the HMG-CoA reductase family.

It localises to the endoplasmic reticulum membrane. It carries out the reaction (R)-mevalonate + 2 NADP(+) + CoA = (3S)-3-hydroxy-3-methylglutaryl-CoA + 2 NADPH + 2 H(+). Its pathway is metabolic intermediate biosynthesis; (R)-mevalonate biosynthesis; (R)-mevalonate from acetyl-CoA: step 3/3. HMG-CoA reductase; part of the first module of ergosterol biosynthesis pathway that includes the early steps of the pathway, conserved across all eukaryotes, and which results in the formation of mevalonate from acetyl-coenzyme A (acetyl-CoA). In this module, the cytosolic acetyl-CoA acetyltransferase catalyzes the formation of acetoacetyl-CoA. The hydroxymethylglutaryl-CoA synthase then condenses acetyl-CoA with acetoacetyl-CoA to form HMG-CoA. The rate-limiting step of the early module is the reduction to mevalonate by the 3-hydroxy-3-methylglutaryl-coenzyme A (HMG-CoA) reductase. In Aspergillus terreus, this protein is 3-hydroxy-3-methylglutaryl-coenzyme A reductase.